Here is a 316-residue protein sequence, read N- to C-terminus: MIQRRTVGIVGTGNVGTAAAYAMFNQSLASEILLLDQDTRRAEGEAMDLMHGQQLVGGITCRAVEYAALSNAQIIVLSAGASQQSPDETRLGLLQRNAEIFREIIIQLDKHAPNAILVVATNPVDVLTYICQELSSRPNRRILGTGTLLDTARFRALLGRHYGVDPRSVHAYILGEHGDSEVPIWSNATIGGQKIRGETVLGKEWEEEAMQSIFEQARDAAYEIIDRKGHTDTAIGLVIARIVRAVLEDQQNVLPVSTRPDGAYGIDDVCLSVPCVVGLEGMEKRVDPGLSDEEREALRDSARALRDSRADLTVGT.

NAD(+) contacts are provided by residues V15, D36, R41, Y66, and 80–81 (GA). Residues Q83, R90, and 122–125 (NPVD) each bind substrate. NAD(+) is bound by residues 120–122 (ATN) and T145. Position 150–153 (150–153 (DTAR)) interacts with substrate. Beta-D-fructose 1,6-bisphosphate-binding residues include R155 and H170. Catalysis depends on H177, which acts as the Proton acceptor. Y222 is modified (phosphotyrosine). T231 serves as a coordination point for substrate. Residues 287 to 316 (DPGLSDEEREALRDSARALRDSRADLTVGT) are disordered. The segment covering 296-310 (EALRDSARALRDSRA) has biased composition (basic and acidic residues).

The protein belongs to the LDH/MDH superfamily. LDH family. As to quaternary structure, homotetramer.

The protein resides in the cytoplasm. It catalyses the reaction (S)-lactate + NAD(+) = pyruvate + NADH + H(+). It functions in the pathway fermentation; pyruvate fermentation to lactate; (S)-lactate from pyruvate: step 1/1. With respect to regulation, allosterically activated by fructose 1,6-bisphosphate (FBP). Its function is as follows. Catalyzes the conversion of lactate to pyruvate. The protein is L-lactate dehydrogenase of Salinibacter ruber (strain DSM 13855 / M31).